The sequence spans 73 residues: Large ribosomal subunit protein uL24 (73 aa).

The span at 51–65 (DDNPKGGFIHKEKPM) shows a compositional bias: basic and acidic residues. The tract at residues 51–73 (DDNPKGGFIHKEKPMHISNVKKA) is disordered.

This sequence belongs to the universal ribosomal protein uL24 family. Part of the 50S ribosomal subunit.

In terms of biological role, one of two assembly initiator proteins, it binds directly to the 5'-end of the 23S rRNA, where it nucleates assembly of the 50S subunit. One of the proteins that surrounds the polypeptide exit tunnel on the outside of the subunit. The sequence is that of Large ribosomal subunit protein uL24 from Helicobacter pylori (strain Shi470).